Consider the following 229-residue polypeptide: Transcriptional activator protein YukR (229 aa).

The HTH luxR-type domain occupies aspartate 157–glutamate 222. The H-T-H motif DNA-binding region spans tyrosine 181–glycine 200.

This sequence belongs to the autoinducer-regulated transcriptional regulatory protein family.

Its function is as follows. Probable transcriptional activator. Binds to an autoinducer molecule. In Yersinia ruckeri, this protein is Transcriptional activator protein YukR (yukR).